The primary structure comprises 494 residues: Guanosine-5'-triphosphate,3'-diphosphate pyrophosphatase (494 aa).

This sequence belongs to the GppA/Ppx family. GppA subfamily.

The catalysed reaction is guanosine 3'-diphosphate 5'-triphosphate + H2O = guanosine 3',5'-bis(diphosphate) + phosphate + H(+). It participates in purine metabolism; ppGpp biosynthesis; ppGpp from GTP: step 2/2. Catalyzes the conversion of pppGpp to ppGpp. Guanosine pentaphosphate (pppGpp) is a cytoplasmic signaling molecule which together with ppGpp controls the 'stringent response', an adaptive process that allows bacteria to respond to amino acid starvation, resulting in the coordinated regulation of numerous cellular activities. This Escherichia coli O157:H7 protein is Guanosine-5'-triphosphate,3'-diphosphate pyrophosphatase.